The primary structure comprises 241 residues: Pyrroloquinoline-quinone synthase (241 aa).

Belongs to the PqqC family.

The catalysed reaction is 6-(2-amino-2-carboxyethyl)-7,8-dioxo-1,2,3,4,7,8-hexahydroquinoline-2,4-dicarboxylate + 3 O2 = pyrroloquinoline quinone + 2 H2O2 + 2 H2O + H(+). The protein operates within cofactor biosynthesis; pyrroloquinoline quinone biosynthesis. Ring cyclization and eight-electron oxidation of 3a-(2-amino-2-carboxyethyl)-4,5-dioxo-4,5,6,7,8,9-hexahydroquinoline-7,9-dicarboxylic-acid to PQQ. In Ruegeria pomeroyi (strain ATCC 700808 / DSM 15171 / DSS-3) (Silicibacter pomeroyi), this protein is Pyrroloquinoline-quinone synthase.